Here is a 430-residue protein sequence, read N- to C-terminus: MSAIIDVYAREVLDSRGNPTVEVEVYTEDGGFGRALVPSGASTGEYEAVELRDGDKNRYLGKGVLKAVENVNEIIAPEIIGLEVADQVAIDRKLIELDGTENKSKLGANAILGVSLAVARAAADELGLPLYQYLGGFNAKTLPVPMMNILNGGAHADNNVDIQEFMIMPVGAESFREALRMGAEIFHSLKAVLKAKGYNTAVGDEGGFAPNLKSNEEALQTIIEAIEKAGYKPGEQVMLAMDVASSELYNKEDGKYHLEGEGVVKTSEEMVAWYEELVSKYPIISIEDGLDENDWEGHKLLTERLGKKVQLVGDDLFVTNTKKLAEGIEKGVGNSILIKVNQIGTLTETFDAIEMAKRAGYTAVVSHRSGETEDSTIADIAVATNAGQIKTGAPSRTDRVAKYNQLLRIEDELGHTAIYQGIRSFYNLKK.

Gln-163 is a binding site for (2R)-2-phosphoglycerate. Glu-205 (proton donor) is an active-site residue. Mg(2+) is bound by residues Asp-242, Glu-287, and Asp-314. 4 residues coordinate (2R)-2-phosphoglycerate: Lys-339, Arg-368, Ser-369, and Lys-390. The active-site Proton acceptor is the Lys-339.

It belongs to the enolase family. It depends on Mg(2+) as a cofactor.

It is found in the cytoplasm. Its subcellular location is the secreted. The protein localises to the cell surface. It catalyses the reaction (2R)-2-phosphoglycerate = phosphoenolpyruvate + H2O. It participates in carbohydrate degradation; glycolysis; pyruvate from D-glyceraldehyde 3-phosphate: step 4/5. In terms of biological role, catalyzes the reversible conversion of 2-phosphoglycerate (2-PG) into phosphoenolpyruvate (PEP). It is essential for the degradation of carbohydrates via glycolysis. This is Enolase from Geobacillus kaustophilus (strain HTA426).